We begin with the raw amino-acid sequence, 140 residues long: ATP synthase epsilon chain (140 aa).

Belongs to the ATPase epsilon chain family. As to quaternary structure, F-type ATPases have 2 components, CF(1) - the catalytic core - and CF(0) - the membrane proton channel. CF(1) has five subunits: alpha(3), beta(3), gamma(1), delta(1), epsilon(1). CF(0) has three main subunits: a, b and c.

The protein localises to the cell inner membrane. Its function is as follows. Produces ATP from ADP in the presence of a proton gradient across the membrane. This is ATP synthase epsilon chain from Sodalis glossinidius (strain morsitans).